Here is a 325-residue protein sequence, read N- to C-terminus: Glutarate 2-hydroxylase (325 aa).

Residues histidine 160, aspartate 162, and histidine 292 each contribute to the Fe cation site.

It belongs to the glutarate hydroxylase family. In terms of assembly, homotetramer. The cofactor is Fe(2+).

The enzyme catalyses glutarate + 2-oxoglutarate + O2 = (S)-2-hydroxyglutarate + succinate + CO2. It functions in the pathway amino-acid degradation. Acts as an alpha-ketoglutarate-dependent dioxygenase catalyzing hydroxylation of glutarate (GA) to L-2-hydroxyglutarate (L2HG). Functions in a L-lysine degradation pathway that proceeds via cadaverine, glutarate and L-2-hydroxyglutarate. The sequence is that of Glutarate 2-hydroxylase from Escherichia coli O6:K15:H31 (strain 536 / UPEC).